The sequence spans 422 residues: Glycine amidinotransferase, mitochondrial (422 aa).

A mitochondrion-targeting transit peptide spans 1–37 (MLRVRCVRGGSRGAEAVHYIGSMLRKGFVGWVQRSFQ). Residues Asp253 and His302 contribute to the active site. Catalysis depends on Cys406, which acts as the Amidino-cysteine intermediate.

Belongs to the amidinotransferase family. Homodimer.

Its subcellular location is the mitochondrion inner membrane. The catalysed reaction is L-arginine + glycine = guanidinoacetate + L-ornithine. The protein operates within amine and polyamine biosynthesis; creatine biosynthesis; creatine from L-arginine and glycine: step 1/2. Catalyzes the biosynthesis of guanidinoacetate, the immediate precursor of creatine. Creatine plays a vital role in energy metabolism in muscle tissues. May play a role in embryonic and central nervous system development. The polypeptide is Glycine amidinotransferase, mitochondrial (Xenopus tropicalis (Western clawed frog)).